A 130-amino-acid polypeptide reads, in one-letter code: Granulin (130 aa).

A signal peptide spans M1–S26. 2 disulfides stabilise this stretch: C67–C79 and C73–C89.

The protein belongs to the granulin family. Post-translationally, granulins are disulfide bridged.

The protein resides in the secreted. This chain is Granulin (grn), found in Dictyostelium discoideum (Social amoeba).